The sequence spans 441 residues: Cytochrome P450 monooxygenase cpsC (441 aa).

Positions serine 175 to glutamine 195 are disordered. Over residues threonine 186–glutamine 195 the composition is skewed to polar residues. Cysteine 377 contributes to the heme binding site.

This sequence belongs to the cytochrome P450 family. Heme is required as a cofactor.

It catalyses the reaction campesine D + reduced [NADPH--hemoprotein reductase] + O2 = campesine G + oxidized [NADPH--hemoprotein reductase] + 2 H2O + H(+). It participates in alkaloid biosynthesis. In terms of biological role, cytochrome P450 monooxygenase; part of the gene cluster that mediates the biosynthesis of campesine G, a dimeric indole piperazine alkaloid that shows good insecticidal activity Galleria mellonella. Within the pathway, cpsC catalyzes regioselective dehydrogenation reaction towards C2-N1 of the (2H)-indole ring of campesine D to yield the final product, campesine G. The non-canonical non-ribosomal peptide synthetase cpsA catalyzes the first steps of the pathway by producing L-tryptophanal and L-valinal from their respective amino-acids. These products condensate spontaneously to form trypyl-valyl pyrazine also known as didehydrocampesine A. The NmrA-like family domain-containing oxidoreductase cpsB is the next enzyme in cps pathway and reduces the unstable didehydrocampesine A to campesine A. The methyltransferase cpsF and the acetyltransferase cpsE both recognize N13 of piperazine ring to carry out methylation and acetylation of campesine A to produce campesine C and B, respectively. The cytochrome P450 monooxygenase cpsD then acts as a dimerase that catalyzes oxidative heterocoupling between campesine B and C to produce heterodimers with unexpected 6/5/6/6/6/6/5/6 eight-ring scaffold called campesine D. Finally,the cytochrome P450 monooxygenase cpsC is a regioselective dehydrogenase that catalyzes dehydrogenation reaction towards C2-N1 to produce campesine G. The sequence is that of Cytochrome P450 monooxygenase cpsC from Aspergillus campestris (strain IBT 28561).